The primary structure comprises 89 residues: Putative regulatory protein CLH_1161 (89 aa).

This sequence belongs to the RemA family.

The polypeptide is Putative regulatory protein CLH_1161 (Clostridium botulinum (strain Alaska E43 / Type E3)).